The chain runs to 158 residues: 6,7-dimethyl-8-ribityllumazine synthase (158 aa).

Residues W28, 59-61 (TVE), and 81-83 (VVV) each bind 5-amino-6-(D-ribitylamino)uracil. 86-87 (DT) contacts (2S)-2-hydroxy-3-oxobutyl phosphate. H89 serves as the catalytic Proton donor. A 5-amino-6-(D-ribitylamino)uracil-binding site is contributed by F114. R128 provides a ligand contact to (2S)-2-hydroxy-3-oxobutyl phosphate.

It belongs to the DMRL synthase family.

The enzyme catalyses (2S)-2-hydroxy-3-oxobutyl phosphate + 5-amino-6-(D-ribitylamino)uracil = 6,7-dimethyl-8-(1-D-ribityl)lumazine + phosphate + 2 H2O + H(+). The protein operates within cofactor biosynthesis; riboflavin biosynthesis; riboflavin from 2-hydroxy-3-oxobutyl phosphate and 5-amino-6-(D-ribitylamino)uracil: step 1/2. Catalyzes the formation of 6,7-dimethyl-8-ribityllumazine by condensation of 5-amino-6-(D-ribitylamino)uracil with 3,4-dihydroxy-2-butanone 4-phosphate. This is the penultimate step in the biosynthesis of riboflavin. In Micrococcus luteus (strain ATCC 4698 / DSM 20030 / JCM 1464 / CCM 169 / CCUG 5858 / IAM 1056 / NBRC 3333 / NCIMB 9278 / NCTC 2665 / VKM Ac-2230) (Micrococcus lysodeikticus), this protein is 6,7-dimethyl-8-ribityllumazine synthase.